We begin with the raw amino-acid sequence, 125 residues long: Phosphoribosyl-AMP cyclohydrolase (125 aa).

Aspartate 80 contacts Mg(2+). Cysteine 81 is a Zn(2+) binding site. 2 residues coordinate Mg(2+): aspartate 82 and aspartate 84. Zn(2+) contacts are provided by cysteine 97 and cysteine 104.

The protein belongs to the PRA-CH family. Homodimer. It depends on Mg(2+) as a cofactor. Zn(2+) serves as cofactor.

The protein resides in the cytoplasm. The catalysed reaction is 1-(5-phospho-beta-D-ribosyl)-5'-AMP + H2O = 1-(5-phospho-beta-D-ribosyl)-5-[(5-phospho-beta-D-ribosylamino)methylideneamino]imidazole-4-carboxamide. It functions in the pathway amino-acid biosynthesis; L-histidine biosynthesis; L-histidine from 5-phospho-alpha-D-ribose 1-diphosphate: step 3/9. Catalyzes the hydrolysis of the adenine ring of phosphoribosyl-AMP. The protein is Phosphoribosyl-AMP cyclohydrolase of Leifsonia xyli subsp. xyli (strain CTCB07).